We begin with the raw amino-acid sequence, 325 residues long: Protein VP6-B (325 aa).

2 disordered regions span residues 23-123 (INLI…TIGA) and 176-229 (VAEQ…EEQA). Basic and acidic residues-rich tracts occupy residues 32-52 (ESGK…ESKD) and 61-79 (SQKK…DRRI). Positions 106–123 (KVGGGGGNADAGVGTIGA) are enriched in gly residues. 2 stretches are compositionally biased toward basic and acidic residues: residues 176-201 (VAEQ…AAER) and 210-226 (PHGD…KTSE).

Belongs to the orbivirus VP6 family.

The protein localises to the virion. Functionally, surrounds and interacts with the genomic dsRNA. Possesses ss- and dsRNA-binding capacity. Its hydrophilic nature and capability to bind ss- and dsRNA suggest that it interacts with BTV genomic RNA. The chain is Protein VP6-B (Segment-9) from Bluetongue virus 10 (isolate USA) (BTV 10).